A 124-amino-acid chain; its full sequence is Superoxide reductase (124 aa).

Fe cation contacts are provided by E14, H16, H41, H47, C111, and H114.

Belongs to the desulfoferrodoxin family. In terms of assembly, homotetramer. It depends on Fe cation as a cofactor.

The catalysed reaction is reduced [rubredoxin] + superoxide + 2 H(+) = oxidized [rubredoxin] + H2O2. In terms of biological role, uses electrons from reduced NADP, by way of rubredoxin and an oxidoreductase, to catalyze the reduction of superoxide to hydrogen peroxide. This chain is Superoxide reductase (sorA), found in Pyrococcus furiosus (strain ATCC 43587 / DSM 3638 / JCM 8422 / Vc1).